We begin with the raw amino-acid sequence, 194 residues long: ATP-dependent Clp protease proteolytic subunit 1 (194 aa).

Ser-98 functions as the Nucleophile in the catalytic mechanism. His-123 is a catalytic residue.

This sequence belongs to the peptidase S14 family. As to quaternary structure, fourteen ClpP subunits assemble into 2 heptameric rings which stack back to back to give a disk-like structure with a central cavity, resembling the structure of eukaryotic proteasomes.

The protein resides in the cytoplasm. It carries out the reaction Hydrolysis of proteins to small peptides in the presence of ATP and magnesium. alpha-casein is the usual test substrate. In the absence of ATP, only oligopeptides shorter than five residues are hydrolyzed (such as succinyl-Leu-Tyr-|-NHMec, and Leu-Tyr-Leu-|-Tyr-Trp, in which cleavage of the -Tyr-|-Leu- and -Tyr-|-Trp bonds also occurs).. Functionally, cleaves peptides in various proteins in a process that requires ATP hydrolysis. Has a chymotrypsin-like activity. Plays a major role in the degradation of misfolded proteins. ClpXP1 is involved in the complete degradation of the Site-2 clipped anti-sigma-W factor RsiW. This results in the release of SigW and the transcription activation of the genes under the control of the sigma-W factor. This is ATP-dependent Clp protease proteolytic subunit 1 from Halalkalibacterium halodurans (strain ATCC BAA-125 / DSM 18197 / FERM 7344 / JCM 9153 / C-125) (Bacillus halodurans).